The following is a 206-amino-acid chain: Glycerol-3-phosphate acyltransferase (206 aa).

5 helical membrane passes run 14-34, 67-87, 91-111, 124-144, and 148-168; these read IALA…GLIL, ATLL…GYFL, AAII…WIGF, LLGV…AVAV, and YSSL…LILG.

It belongs to the PlsY family. In terms of assembly, probably interacts with PlsX.

Its subcellular location is the cell inner membrane. The catalysed reaction is an acyl phosphate + sn-glycerol 3-phosphate = a 1-acyl-sn-glycero-3-phosphate + phosphate. Its pathway is lipid metabolism; phospholipid metabolism. Functionally, catalyzes the transfer of an acyl group from acyl-phosphate (acyl-PO(4)) to glycerol-3-phosphate (G3P) to form lysophosphatidic acid (LPA). This enzyme utilizes acyl-phosphate as fatty acyl donor, but not acyl-CoA or acyl-ACP. This is Glycerol-3-phosphate acyltransferase from Rhizobium etli (strain ATCC 51251 / DSM 11541 / JCM 21823 / NBRC 15573 / CFN 42).